A 468-amino-acid polypeptide reads, in one-letter code: Putative chitinase 1 (468 aa).

The signal sequence occupies residues 1–21 (MDFYSSLLPFLILIYLEFCSG). The region spanning 22-381 (FNRVCYYNGW…MSIIHGLGEY (360 aa)) is the GH18 domain. A disulfide bond links Cys26 and Cys51. Chitin is bound by residues 73–74 (VF) and 100–103 (GGWD). The active-site Proton donor is the Glu143. Chitin-binding positions include Tyr144, 213–216 (KMYD), and Trp353. Positions 386 to 440 (SDTLEAEREMINKKIRKAAREISYYSDKGNSTMAKKMEDKLNQLKDHLSAVQAHQ) form a coiled coil.

This sequence belongs to the glycosyl hydrolase 18 family. As to expression, prismatic layer of shell (at protein level). Expressed primarily in the mantle with highest level in the outer epithelium of the mantle edge and lower level in the mantle pallium.

The protein resides in the secreted. The catalysed reaction is Random endo-hydrolysis of N-acetyl-beta-D-glucosaminide (1-&gt;4)-beta-linkages in chitin and chitodextrins.. The protein is Putative chitinase 1 of Margaritifera margaritifera (Freshwater pearl mussel).